We begin with the raw amino-acid sequence, 340 residues long: Hyaluronan and proteoglycan link protein 2 (340 aa).

The signal sequence occupies residues 1–26 (MPGWLTLPTLCRFLLWAFTIFHKAQG). Positions 34–144 (PHYLLPPIHE…EDESVALTLS (111 aa)) constitute an Ig-like V-type domain. 5 cysteine pairs are disulfide-bonded: C57-C128, C170-C240, C194-C215, C265-C336, and C290-C311. Link domains are found at residues 148–242 (VVFP…FCFT) and 245–338 (LAGQ…YCYA).

Belongs to the HAPLN family. In terms of tissue distribution, expressed only in adult brain.

The protein localises to the secreted. It localises to the extracellular space. Its subcellular location is the extracellular matrix. In terms of biological role, mediates a firm binding of versican V2 to hyaluronic acid. May play a pivotal role in the formation of the hyaluronan-associated matrix in the central nervous system (CNS) which facilitates neuronal conduction and general structural stabilization. Binds to hyaluronic acid. In Homo sapiens (Human), this protein is Hyaluronan and proteoglycan link protein 2 (HAPLN2).